Reading from the N-terminus, the 438-residue chain is Trigger factor (438 aa).

One can recognise a PPIase FKBP-type domain in the interval 163–248; the sequence is GEIAVLDFAA…VHAVKERKLP (86 aa).

Belongs to the FKBP-type PPIase family. Tig subfamily.

The protein resides in the cytoplasm. It catalyses the reaction [protein]-peptidylproline (omega=180) = [protein]-peptidylproline (omega=0). In terms of biological role, involved in protein export. Acts as a chaperone by maintaining the newly synthesized protein in an open conformation. Functions as a peptidyl-prolyl cis-trans isomerase. In Oleidesulfovibrio alaskensis (strain ATCC BAA-1058 / DSM 17464 / G20) (Desulfovibrio alaskensis), this protein is Trigger factor.